Here is a 496-residue protein sequence, read N- to C-terminus: Maturase K (496 aa).

This sequence belongs to the intron maturase 2 family. MatK subfamily.

Its subcellular location is the plastid. It is found in the chloroplast. Functionally, usually encoded in the trnK tRNA gene intron. Probably assists in splicing its own and other chloroplast group II introns. In Paeonia lactiflora (Chinese peony), this protein is Maturase K.